The sequence spans 608 residues: Glutamyl-tRNA(Gln) amidotransferase subunit E (608 aa).

This sequence belongs to the GatB/GatE family. GatE subfamily. As to quaternary structure, heterodimer of GatD and GatE.

The catalysed reaction is L-glutamyl-tRNA(Gln) + L-glutamine + ATP + H2O = L-glutaminyl-tRNA(Gln) + L-glutamate + ADP + phosphate + H(+). In terms of biological role, allows the formation of correctly charged Gln-tRNA(Gln) through the transamidation of misacylated Glu-tRNA(Gln) in organisms which lack glutaminyl-tRNA synthetase. The reaction takes place in the presence of glutamine and ATP through an activated gamma-phospho-Glu-tRNA(Gln). The GatDE system is specific for glutamate and does not act on aspartate. This chain is Glutamyl-tRNA(Gln) amidotransferase subunit E, found in Pyrobaculum aerophilum (strain ATCC 51768 / DSM 7523 / JCM 9630 / CIP 104966 / NBRC 100827 / IM2).